The sequence spans 2892 residues: Inositol 1,4,5-trisphosphate receptor itr-1 (2892 aa).

Residues 1–2475 (MNPSYGRVRK…YPLPEHSNSS (2475 aa)) are Cytoplasmic-facing. MIR domains follow at residues 192–246 (GNVI…IEPA), 319–379 (QNSV…VQVV), 386–466 (GGTA…LGPT), and 490–551 (NKEV…LLPV). Residue 357-361 (RMTNR) participates in 1D-myo-inositol 1,4,5-trisphosphate binding. 1D-myo-inositol 1,4,5-trisphosphate is bound by residues 625–628 (KLLR) and 689–691 (YRK). The disordered stretch occupies residues 1030–1056 (MMRGGNKENSKDLAKTPSVTAEEAGRT). The span at 1034–1043 (GNKENSKDLA) shows a compositional bias: basic and acidic residues. The helical transmembrane segment at 2476 to 2496 (ISLGNLYSWFAVFSSFLLAHY) threads the bilayer. Over 2497 to 2514 (LRHDKIYLHKTSLLILAS) the chain is Extracellular. The helical transmembrane segment at 2515-2535 (LCFLLLSSIGVTLTLYIFGIL) threads the bilayer. Topologically, residues 2536-2572 (QLVNKIVHVVAFVSNKGLEDRPIAEILACRNLHYLLV) are cytoplasmic. A helical transmembrane segment spans residues 2573 to 2593 (YLFICILGLLVHPMIYCILLF). The Extracellular segment spans residues 2594–2615 (DIIFTEETLQNVIASVTRNYQS). Residues 2616–2636 (IVWTGLLALILLYFFSILGFL) form a helical membrane-spanning segment. At 2637–2735 (YFRHDFYLEV…FIWRVAYDMT (99 aa)) the chain is on the cytoplasmic side. The span at 2655-2666 (ATISSGIPSETC) shows a compositional bias: polar residues. The interval 2655–2685 (ATISSGIPSETCPSEGCPGLQPSEKDDNDDE) is disordered. The helical transmembrane segment at 2736-2756 (FFVVLIVIVLNLIFGVIIDTF) threads the bilayer. The Extracellular portion of the chain corresponds to 2757–2892 (GDLRAEKNEK…RAFMEQFQPR (136 aa)).

This sequence belongs to the InsP3 receptor family. Interacts with myo-1, myo-2, unc-54/myo-4 and nmy-2. Also interacts with iri-1. As to expression, isoform a is expressed in the anterior cells of the pharyngeal terminal bulb, vulva, rectal epithelial cells, spicule protractor muscles of the proctodeum and male-specific neuron CP8 or CP9. Isoform d is expressed in the spermatheca, excretory cell, amphid socket cells, PDA motor neuron, spicule retractor muscles, gubernaculum retractor muscles, posterior oblique muscles, diagonal muscles and the vas deferens. Also expressed in the intestine, pharynx, pharyngeal isthmus, pharyngeal intestinal valve, somatic gonad, hypodermal cells of the vulva, uterine sheath cells, tail, head, LUA motor neuron and the embryonic epidermis (at protein level).

Its subcellular location is the endoplasmic reticulum membrane. Receptor for inositol 1,4,5-trisphosphate, a second messenger that regulates intracellular calcium homeostasis. Binds in vitro to both inositol 1,4,5-trisphosphate (1,4,5-InsP3) and inositol 2,4,5-trisphosphate (2,4,5-InsP3) with high affinity and does not discriminate between the phosphate at 1 or 2 position. Can also bind inositol 1,3,4,5-tetrakisphosphate (1,3,4,5-InsP4) and inositol 4,5-bisphosphate (4,5-InsP2), but with lower affinity. Acts as a timekeeper/rhythm generator via calcium signaling, affecting the defecation cycle and pharyngeal pumping. Affects normal hermaphrodite and male fertility as a participant in intracellular signaling by acting downstream of let-23/lin-3 which regulates ovulation, spermathecal valve dilation and male mating behavior. Important for early embryonic development; controls epidermal cell migration and may also regulate filopodial protrusive activity during epithelial morphogenesis. Component of inositol trisphosphate (IP3)-mediated downstream signaling pathways that controls amphid sensory neuronal (ASH)-mediated response to nose touch and benzaldehyde but not other ASH-mediated responses. Involved in modulating lifespan, acting downstream of transcription factor atf-6. In Caenorhabditis elegans, this protein is Inositol 1,4,5-trisphosphate receptor itr-1.